The primary structure comprises 166 residues: CDP-archaeol synthase (166 aa).

5 helical membrane-spanning segments follow: residues 1-21, 55-75, 78-98, 110-130, and 131-151; these read MPII…LVAN, LLVA…FLGI, IYVS…GAFI, AIGL…IISK, and ISLN…LHIL.

It belongs to the CDP-archaeol synthase family. Requires Mg(2+) as cofactor.

It is found in the cell membrane. It carries out the reaction 2,3-bis-O-(geranylgeranyl)-sn-glycerol 1-phosphate + CTP + H(+) = CDP-2,3-bis-O-(geranylgeranyl)-sn-glycerol + diphosphate. It functions in the pathway membrane lipid metabolism; glycerophospholipid metabolism. In terms of biological role, catalyzes the formation of CDP-2,3-bis-(O-geranylgeranyl)-sn-glycerol (CDP-archaeol) from 2,3-bis-(O-geranylgeranyl)-sn-glycerol 1-phosphate (DGGGP) and CTP. This reaction is the third ether-bond-formation step in the biosynthesis of archaeal membrane lipids. The polypeptide is CDP-archaeol synthase (Sulfurisphaera tokodaii (strain DSM 16993 / JCM 10545 / NBRC 100140 / 7) (Sulfolobus tokodaii)).